We begin with the raw amino-acid sequence, 230 residues long: Leucyl/phenylalanyl-tRNA--protein transferase (230 aa).

The protein belongs to the L/F-transferase family.

The protein localises to the cytoplasm. It carries out the reaction N-terminal L-lysyl-[protein] + L-leucyl-tRNA(Leu) = N-terminal L-leucyl-L-lysyl-[protein] + tRNA(Leu) + H(+). The enzyme catalyses N-terminal L-arginyl-[protein] + L-leucyl-tRNA(Leu) = N-terminal L-leucyl-L-arginyl-[protein] + tRNA(Leu) + H(+). It catalyses the reaction L-phenylalanyl-tRNA(Phe) + an N-terminal L-alpha-aminoacyl-[protein] = an N-terminal L-phenylalanyl-L-alpha-aminoacyl-[protein] + tRNA(Phe). In terms of biological role, functions in the N-end rule pathway of protein degradation where it conjugates Leu, Phe and, less efficiently, Met from aminoacyl-tRNAs to the N-termini of proteins containing an N-terminal arginine or lysine. The sequence is that of Leucyl/phenylalanyl-tRNA--protein transferase from Hamiltonella defensa subsp. Acyrthosiphon pisum (strain 5AT).